The primary structure comprises 340 residues: Protein RecA (340 aa).

65–72 (GPESGGKT) contacts ATP.

This sequence belongs to the RecA family.

It localises to the cytoplasm. Can catalyze the hydrolysis of ATP in the presence of single-stranded DNA, the ATP-dependent uptake of single-stranded DNA by duplex DNA, and the ATP-dependent hybridization of homologous single-stranded DNAs. It interacts with LexA causing its activation and leading to its autocatalytic cleavage. In Thermus thermophilus (strain ATCC BAA-163 / DSM 7039 / HB27), this protein is Protein RecA.